The chain runs to 817 residues: Kinesin-like protein 2 (817 aa).

A disordered region spans residues 1–155 (MEEEGHKSLT…YNDEKSVNAS (155 aa)). Residues 8-23 (SLTSHLPQSSSSLSQS) show a composition bias toward low complexity. Positions 39–60 (IKTNSSSSNILKPRLSLQNEVN) are enriched in polar residues. Over residues 76-86 (SLASVKSSSLA) the composition is skewed to low complexity. Residues 106–116 (PISSRSVSASS) are compositionally biased toward polar residues. Low complexity predominate over residues 122 to 132 (ASAVSSSLNSS). Positions 155–242 (SALRTTEDRL…VSQKGMESLE (88 aa)) form a coiled coil. ATP contacts are provided by Asn-473, Arg-475, Arg-479, Glu-543, Gly-566, Ser-567, Gly-568, Lys-569, Thr-570, and Thr-778. Positions 473-807 (NIRVFCRVRP…LRFATKVNNT (335 aa)) constitute a Kinesin motor domain.

This sequence belongs to the TRAFAC class myosin-kinesin ATPase superfamily. Kinesin family. NCD subfamily.

The protein resides in the cytoplasm. It is found in the cytoskeleton. Its subcellular location is the spindle. It localises to the nucleus. It carries out the reaction ATP + H2O = ADP + phosphate + H(+). It catalyses the reaction ATP + H2O + a kinesin associated with a microtubule at position (n) = ADP + phosphate + a kinesin associated with a microtubule at position (n-1, toward the minus end).. Functionally, minus end-directed microtubule (MT) motor that is involved in spindle microtubule shortening, kinetochore capture, and polarization of cytoplasmic microtubules. During mitosis, promotes spindle microtubule shortening by depolymerization. During metaphase, involved in the recapture of kinetochores displaced from the spindle and their transport towards the spindle pole body; promotes transport both by microtubule end-on pulling and by lateral sliding along the side of the microtubule. During interphase, required for the polarization of cytoplasmic microtubules where it orients the microtubule plus ends toward the cell ends and the minus ends toward the cell center. Required for karyogamy. The polypeptide is Kinesin-like protein 2 (Schizosaccharomyces pombe (strain 972 / ATCC 24843) (Fission yeast)).